Reading from the N-terminus, the 77-residue chain is Conotoxin ArMSGL-0141 (77 aa).

Positions 1 to 18 (MSGLGILVLTLLLLVYMA) are cleaved as a signal peptide. A propeptide spanning residues 19–44 (TSHQDAGEKQATQRDAINVRRRRSLT) is cleaved from the precursor. Cystine bridges form between Cys-51–Cys-63, Cys-55–Cys-71, and Cys-62–Cys-75. The residue at position 76 (Phe-76) is a Phenylalanine amide.

This sequence belongs to the conotoxin O3 superfamily. As to expression, expressed by the venom duct.

Its subcellular location is the secreted. The sequence is that of Conotoxin ArMSGL-0141 from Conus arenatus (Sand-dusted cone).